The following is a 427-amino-acid chain: Enolase (427 aa).

Glutamine 163 lines the (2R)-2-phosphoglycerate pocket. Glutamate 205 acts as the Proton donor in catalysis. Mg(2+) is bound by residues aspartate 242, glutamate 285, and aspartate 312. Residues lysine 337, arginine 366, serine 367, and lysine 388 each coordinate (2R)-2-phosphoglycerate. The active-site Proton acceptor is lysine 337.

It belongs to the enolase family. Requires Mg(2+) as cofactor.

The protein localises to the cytoplasm. It is found in the secreted. It localises to the cell surface. The catalysed reaction is (2R)-2-phosphoglycerate = phosphoenolpyruvate + H2O. Its pathway is carbohydrate degradation; glycolysis; pyruvate from D-glyceraldehyde 3-phosphate: step 4/5. Its function is as follows. Catalyzes the reversible conversion of 2-phosphoglycerate (2-PG) into phosphoenolpyruvate (PEP). It is essential for the degradation of carbohydrates via glycolysis. The polypeptide is Enolase (Laribacter hongkongensis (strain HLHK9)).